The primary structure comprises 116 residues: Large ribosomal subunit protein bL19 (116 aa).

It belongs to the bacterial ribosomal protein bL19 family.

Functionally, this protein is located at the 30S-50S ribosomal subunit interface and may play a role in the structure and function of the aminoacyl-tRNA binding site. This is Large ribosomal subunit protein bL19 from Flavobacterium johnsoniae (strain ATCC 17061 / DSM 2064 / JCM 8514 / BCRC 14874 / CCUG 350202 / NBRC 14942 / NCIMB 11054 / UW101) (Cytophaga johnsonae).